The sequence spans 269 residues: Zinc transporter ZupT (269 aa).

A run of 8 helical transmembrane segments spans residues 5–25 (VLLAFGLTLFAGLATGVGSLI), 38–58 (SLALGFSAGVMIYVSLVEIFV), 75–95 (WMTIAGFFGGMLFIALIDKFI), 125–145 (MGIFTALAIGIHNFPEGIATF), 158–178 (IAIAVAIHNIPEGIAVSVPIF), 190–210 (LSFLSGLAEPVGALVAFLLLM), 212–232 (FLTDVMFGIIFAGVAGIMVFI), and 249–269 (LSMYGLVGGMAVMAISLVLLV). Fe(2+) contacts are provided by Asn-137 and Glu-140. Residues Glu-140 and His-165 each contribute to the Zn(2+) site. Residues Asn-166, Glu-169, and Glu-198 each contribute to the Fe(2+) site. Residue Glu-169 participates in Zn(2+) binding.

The protein belongs to the ZIP transporter (TC 2.A.5) family. ZupT subfamily.

It is found in the cell membrane. It catalyses the reaction Zn(2+)(in) = Zn(2+)(out). In terms of biological role, mediates zinc uptake. May also transport other divalent cations. This Lysinibacillus sphaericus (strain C3-41) protein is Zinc transporter ZupT.